Here is a 90-residue protein sequence, read N- to C-terminus: Small ribosomal subunit protein bS16 (90 aa).

It belongs to the bacterial ribosomal protein bS16 family.

This chain is Small ribosomal subunit protein bS16, found in Lactobacillus gasseri (strain ATCC 33323 / DSM 20243 / BCRC 14619 / CIP 102991 / JCM 1131 / KCTC 3163 / NCIMB 11718 / NCTC 13722 / AM63).